The sequence spans 623 residues: Frizzled and smoothened-like protein M (623 aa).

The N-terminal stretch at 1–18 is a signal peptide; the sequence is MKSIFIIIFILYVFQVNS. The Extracellular segment spans residues 19–243; it reads QTIYPIDPSG…WDQLYNLSNT (225 aa). The 139-residue stretch at 25–163 folds into the FZ domain; sequence DPSGKCEQYI…NYSEFNLTNY (139 aa). Cystine bridges form between cysteine 30/cysteine 100 and cysteine 42/cysteine 93. Asparagine 57, asparagine 106, asparagine 109, asparagine 154, asparagine 159, asparagine 169, asparagine 199, and asparagine 239 each carry an N-linked (GlcNAc...) asparagine glycan. A helical transmembrane segment spans residues 244–264; it reads LAVLSTFGSLYLLVTFIILNP. Residues 265-273 are Cytoplasmic-facing; it reads KVTSFDRMY. The helical transmembrane segment at 274–294 threads the bilayer; that stretch reads GFFNGSVFMMSLSGVILFIAG. Residues 295–317 lie on the Extracellular side of the membrane; the sequence is GPRALIKDGGARISVFEDPLCSS. Residues 318-338 form a helical membrane-spanning segment; it reads TGFIFQLFAINAILFWAYMGF. Topologically, residues 339–354 are cytoplasmic; the sequence is DLWWRVKYITKPLNIQ. The helical transmembrane segment at 355–375 threads the bilayer; the sequence is KYYVPIAFTISFIFSVIPLAT. The Extracellular portion of the chain corresponds to 376-397; that stretch reads KNYRMVRGNIHCWVHKAVLQNT. Residues 398 to 418 traverse the membrane as a helical segment; that stretch reads LFFGPLGLTLTISTGFIGLVI. The Cytoplasmic segment spans residues 419 to 439; sequence YEIYKIVKATGRGGIMKLEIK. Residues 440–460 form a helical membrane-spanning segment; it reads PILNIVLIYFSFVYIFAFNFH. The Extracellular segment spans residues 461-494; that stretch reads NDNNSKNTYGSIDEFFQCTLESDDPSKCTVGGPS. N-linked (GlcNAc...) asparagine glycosylation is present at asparagine 463. Residues 495–515 traverse the membrane as a helical segment; that stretch reads IGSLGYFIYCIRIYGIYCFFL. Topologically, residues 516-623 are cytoplasmic; it reads QGLNERAFKI…DIEIGSVNIK (108 aa). A disordered region spans residues 552-590; it reads PSESGNSSTTAGTSTTINNSNINKKNNNSKPTLSTMDSN. Over residues 555 to 580 the composition is skewed to low complexity; it reads SGNSSTTAGTSTTINNSNINKKNNNS.

The protein belongs to the G-protein coupled receptor Fz/Smo family.

The protein localises to the membrane. The polypeptide is Frizzled and smoothened-like protein M (fslM-1) (Dictyostelium discoideum (Social amoeba)).